Consider the following 81-residue polypeptide: Small ribosomal subunit protein bS16 (81 aa).

The protein belongs to the bacterial ribosomal protein bS16 family.

In Coprothermobacter proteolyticus (strain ATCC 35245 / DSM 5265 / OCM 4 / BT), this protein is Small ribosomal subunit protein bS16.